A 92-amino-acid polypeptide reads, in one-letter code: Small ribosomal subunit protein uS17 (92 aa).

It belongs to the universal ribosomal protein uS17 family. Part of the 30S ribosomal subunit.

Functionally, one of the primary rRNA binding proteins, it binds specifically to the 5'-end of 16S ribosomal RNA. This is Small ribosomal subunit protein uS17 from Wigglesworthia glossinidia brevipalpis.